A 485-amino-acid polypeptide reads, in one-letter code: DNA polymerase subunit gamma-2 (485 aa).

The disordered stretch occupies residues 28–67; it reads RQPEQLSKGTGSFVGPVRSQAELPRNEPREAPESGGEGSE.

Heterotrimer composed of a catalytic subunit and a homodimer of accessory subunits (POLG:POLG2).

It localises to the mitochondrion. It is found in the mitochondrion matrix. Its subcellular location is the mitochondrion nucleoid. Functionally, accessory subunit of DNA polymerase gamma solely responsible for replication of mitochondrial DNA (mtDNA). Acts as an allosteric regulator of the holoenzyme activities. Enhances the polymerase activity and the processivity of POLG by increasing its interactions with the DNA template. Suppresses POLG exonucleolytic proofreading especially toward homopolymeric templates bearing mismatched termini. Binds to single-stranded DNA. This chain is DNA polymerase subunit gamma-2 (POLG2), found in Bos taurus (Bovine).